We begin with the raw amino-acid sequence, 75 residues long: uncharacterized protein (75 aa).

The first 21 residues, 1-21, serve as a signal peptide directing secretion; the sequence is MRLIVVSIMVTLLSGCGSIIS.

To E.coli YidQ.

This is an uncharacterized protein from Escherichia coli O157:H7.